A 2879-amino-acid chain; its full sequence is Peramine synthetase ppzA (2879 aa).

A compositionally biased stretch (basic and acidic residues) spans 1-12; the sequence is MTYDEGGHRNNE. The interval 1 to 52 is disordered; sequence MTYDEGGHRNNEETPQDVNMSSNNEGMSTSSPTGSYGEIIGQATVSVPQEDQ. Polar residues predominate over residues 16 to 34; that stretch reads QDVNMSSNNEGMSTSSPTG. The adenylation 1 stretch occupies residues 351-747; the sequence is QEQCRLQPNT…VGRKDTQVKI (397 aa). The Carrier 1 domain occupies 882 to 958; sequence QPLSDMERLL…DLSRQSKYIE (77 aa). Ser919 is subject to O-(pantetheine 4'-phosphoryl)serine. Positions 997 to 1410 are condensation; sequence DAYPCTPLQE…ITILTTEDLE (414 aa). The adenylation 2 stretch occupies residues 1433 to 1827; the sequence is DKVQHRPNAP…LSFVRRKDTT (395 aa). The tract at residues 1958-2050 is methylation (Met) domain; sequence LEIGCGSGMM…KYLVKLIQDI (93 aa). Residues 2370–2448 form the Carrier 2 domain; that stretch reads WPTTDTGKEL…RLLLDCCCDD (79 aa). Ser2407 carries the post-translational modification O-(pantetheine 4'-phosphoryl)serine. The segment at 2500 to 2817 is thiesterase (TE) domain; the sequence is TVLLTGANGF…LEDMLQDLDD (318 aa).

It belongs to the NRP synthetase family. The cofactor is pantetheine 4'-phosphate.

It carries out the reaction (S)-1-pyrroline-5-carboxylate + L-arginine + S-adenosyl-L-methionine + 2 ATP = peramine + 2 AMP + S-adenosyl-L-homocysteine + 2 diphosphate + H2O + 2 H(+). Its pathway is secondary metabolite biosynthesis. Functionally, nonribosomal peptide synthetase; part of the gene cluster that mediates the biosynthesis of pyrrolopyrazines, secondary metabolites showing insecticidal activity. The single multifunctional NRPS ppzA is responsible for the biosynthesis of peramine. The condensation domain of ppzA is proposed to catalyze formation of a peptide bond between 1-pyrroline-5-carboxylate and arginine. The methylation domain of ppzA would catalyze the N-methylation of the alpha-amino group of arginine. The reductase domain is proposed to be responsible for reduction of the thioester and the cyclization to form an iminium ion resulting in release from the peptide synthetase. Deprotonation of this intermediate and oxidation of the pyrroline ring would give rise to peramine. This final oxidation to give the pyrrole functionality may be spontaneous. In Epichloe species that produce only peramine, the peramine synthetase gene is not localized in a gene cluster, in contrast to Metarhizium species that contain additional pyrrolopyrazine biosynthesis genes. The 2-oxoglutarate-Fe(II) type oxidoreductase ppzC hydroxylates peramine to yield the newly identified compound 8-hydroxyperamine whereas ppzD converts L-proline into trans-4-hydroxy-L-proline, a precursor of peramine biosynthesis. The protein is Peramine synthetase ppzA of Metarhizium rileyi (strain RCEF 4871) (Nomuraea rileyi).